Consider the following 568-residue polypeptide: bZIP transcription factor 60 (568 aa).

Composition is skewed to low complexity over residues 1–13 and 60–78; these read MAEPDLLAPFADL and TTSSSSSAAGSPEAGTSSA. Disordered stretches follow at residues 1-29 and 45-134; these read MAEPDLLAPFADLPFPPGDDFPDFPTLGD and DFDV…RKKQ. Residues 1-240 are Cytoplasmic-facing; it reads MAEPDLLAPF…PAKKARKTKK (240 aa). Basic and acidic residues predominate over residues 103–113; that stretch reads GGKDGKDDEAK. In terms of domain architecture, bZIP spans 111-171; that stretch reads EAKRRARLVR…AENAALKQQL (61 aa). The basic motif stretch occupies residues 113–144; that stretch reads KRRARLVRNRESAHQSRQRKKQYVEELEGKVK. Positions 150–157 are leucine-zipper; the sequence is IADLTARI. A helical transmembrane segment spans residues 241 to 261; the sequence is VAGVSLLGLLFLMMVCGCLVP. At 262–568 the chain is on the lumenal side; the sequence is AVNRMYGAAY…LPFKSHSPHL (307 aa). Residues Asn-307, Asn-452, Asn-456, Asn-488, and Asn-499 are each glycosylated (N-linked (GlcNAc...) asparagine). Residues 479–510 are disordered; it reads AIPLRGSTSNDTDHFKAPPKNHSQSHAGRKPV.

Belongs to the bZIP family.

The protein localises to the endoplasmic reticulum membrane. It localises to the nucleus. In terms of biological role, transcription factor involved in endoplasmic reticulum (ER) stress response. Acts as a ER stress sensor and activates the transcription factor BZIP50 and the chaperone BIP1. This is bZIP transcription factor 60 from Oryza sativa subsp. japonica (Rice).